A 246-amino-acid chain; its full sequence is Pyridoxine 5'-phosphate synthase (246 aa).

Asparagine 12 serves as a coordination point for 3-amino-2-oxopropyl phosphate. 1-deoxy-D-xylulose 5-phosphate is bound at residue 14–15; sequence DH. Arginine 23 lines the 3-amino-2-oxopropyl phosphate pocket. Histidine 48 functions as the Proton acceptor in the catalytic mechanism. 2 residues coordinate 1-deoxy-D-xylulose 5-phosphate: arginine 50 and histidine 55. The Proton acceptor role is filled by glutamate 75. Threonine 105 contacts 1-deoxy-D-xylulose 5-phosphate. Histidine 196 acts as the Proton donor in catalysis. Residues glycine 197 and 218–219 each bind 3-amino-2-oxopropyl phosphate; that span reads GH.

Belongs to the PNP synthase family. In terms of assembly, homooctamer; tetramer of dimers.

It localises to the cytoplasm. It carries out the reaction 3-amino-2-oxopropyl phosphate + 1-deoxy-D-xylulose 5-phosphate = pyridoxine 5'-phosphate + phosphate + 2 H2O + H(+). Its pathway is cofactor biosynthesis; pyridoxine 5'-phosphate biosynthesis; pyridoxine 5'-phosphate from D-erythrose 4-phosphate: step 5/5. Catalyzes the complicated ring closure reaction between the two acyclic compounds 1-deoxy-D-xylulose-5-phosphate (DXP) and 3-amino-2-oxopropyl phosphate (1-amino-acetone-3-phosphate or AAP) to form pyridoxine 5'-phosphate (PNP) and inorganic phosphate. The protein is Pyridoxine 5'-phosphate synthase of Thioalkalivibrio sulfidiphilus (strain HL-EbGR7).